Reading from the N-terminus, the 553-residue chain is Dihydroxy-acid dehydratase (553 aa).

Aspartate 78 lines the Mg(2+) pocket. [2Fe-2S] cluster is bound at residue cysteine 119. Residues aspartate 120 and lysine 121 each coordinate Mg(2+). The residue at position 121 (lysine 121) is an N6-carboxylysine. A [2Fe-2S] cluster-binding site is contributed by cysteine 193. Glutamate 441 provides a ligand contact to Mg(2+). Residue serine 467 is the Proton acceptor of the active site.

The protein belongs to the IlvD/Edd family. Homodimer. The cofactor is [2Fe-2S] cluster. Mg(2+) serves as cofactor.

It carries out the reaction (2R)-2,3-dihydroxy-3-methylbutanoate = 3-methyl-2-oxobutanoate + H2O. The catalysed reaction is (2R,3R)-2,3-dihydroxy-3-methylpentanoate = (S)-3-methyl-2-oxopentanoate + H2O. The protein operates within amino-acid biosynthesis; L-isoleucine biosynthesis; L-isoleucine from 2-oxobutanoate: step 3/4. It functions in the pathway amino-acid biosynthesis; L-valine biosynthesis; L-valine from pyruvate: step 3/4. Functions in the biosynthesis of branched-chain amino acids. Catalyzes the dehydration of (2R,3R)-2,3-dihydroxy-3-methylpentanoate (2,3-dihydroxy-3-methylvalerate) into 2-oxo-3-methylpentanoate (2-oxo-3-methylvalerate) and of (2R)-2,3-dihydroxy-3-methylbutanoate (2,3-dihydroxyisovalerate) into 2-oxo-3-methylbutanoate (2-oxoisovalerate), the penultimate precursor to L-isoleucine and L-valine, respectively. This is Dihydroxy-acid dehydratase from Citrifermentans bemidjiense (strain ATCC BAA-1014 / DSM 16622 / JCM 12645 / Bem) (Geobacter bemidjiensis).